Reading from the N-terminus, the 7639-residue chain is Nonribosomal peptide synthetase 4 (7639 aa).

Residues tryptophan 244–phenylalanine 636 are adenylation 1. In terms of domain architecture, Carrier 1 spans threonine 776–glutamate 852. Serine 813 bears the O-(pantetheine 4'-phosphoryl)serine mark. The epimerization 1 stretch occupies residues phenylalanine 865–serine 1295. Residues valine 1337–isoleucine 1767 are condensation 1. The interval phenylalanine 1786–leucine 2181 is adenylation 2. One can recognise a Carrier 2 domain in the interval alanine 2313–serine 2389. Serine 2350 bears the O-(pantetheine 4'-phosphoryl)serine mark. The interval valine 2426–leucine 2852 is condensation 2. The adenylation 3 stretch occupies residues glutamine 2878 to isoleucine 3269. Residues arginine 3403 to glutamate 3479 form the Carrier 3 domain. At serine 3440 the chain carries O-(pantetheine 4'-phosphoryl)serine. The segment at alanine 3491–glutamine 3928 is epimerization 2. The tract at residues glutamate 3961 to threonine 4389 is condensation 3. The segment at phenylalanine 4407 to leucine 4810 is adenylation 4. Residues alanine 4944–glutamate 5020 form the Carrier 4 domain. Serine 4981 carries the O-(pantetheine 4'-phosphoryl)serine modification. The tract at residues glutamine 5058 to methionine 5478 is condensation 4. Positions phenylalanine 5498–leucine 5900 are adenylation 5. Residues threonine 6039–glycine 6115 form the Carrier 5 domain. O-(pantetheine 4'-phosphoryl)serine is present on serine 6076. The interval phenylalanine 6133–leucine 6567 is epimerization 3. Residues valine 6607–glutamine 7032 form a condensation 5 region. Residues arginine 7088–serine 7164 form the Carrier 6 domain. The residue at position 7125 (serine 7125) is an O-(pantetheine 4'-phosphoryl)serine. Positions leucine 7254–arginine 7603 are condensation 6.

Belongs to the NRP synthetase family.

The catalysed reaction is D-allo-threonine + D-leucine + D-alanine + L-proline + 2 L-leucine + A = fusahexin + AH2 + 6 H2O. It functions in the pathway secondary metabolite biosynthesis. Functionally, nonribosomal peptide synthetase; part of the gene cluster that mediates the biosynthesis of the fusahexin, a cyclic hydrophobic hexapeptide with the amino acid sequence cyclo-(D-Ala-L-Leu-D-allo-Thr-L-Pro-D-Leu-L-Leu) that plays an important role in cell surface hydrophobicity. Fusahexin might also play a role in virulence, sensitivity to osmotic stress and oxidative stress. NRPS4 is the only enzyme within the cluster and its 5 catalytic modules are sufficient to produce fusahexin. The modules 1 to 4 incorporate respectively D-alanine, L-leucine, D-allo-threonine, and L-proline, which is supported by the presence of epimerase domains in modules 1 and 3, which incorporate D-amino acids. The terminal module is responsible for incorporation of the two adjacent leucine units, where the epimerase domain is only used to convert the first unit to D-leucine. The terminal condensation domain (Ct) is involved in cyclization with D-alanine and thereby releasing of fusahexin. The sequence is that of Nonribosomal peptide synthetase 4 from Gibberella zeae (strain ATCC MYA-4620 / CBS 123657 / FGSC 9075 / NRRL 31084 / PH-1) (Wheat head blight fungus).